The sequence spans 367 residues: Choline-phosphate cytidylyltransferase A (367 aa).

An N-acetylmethionine modification is found at methionine 1. The disordered stretch occupies residues 1 to 33 (MDAQCSAKVNARKRRKEAPGPNGATEEDGVPSK). Position 8 is an N6-acetyllysine (lysine 8). CTP is bound by residues isoleucine 84, phenylalanine 85, histidine 92, and lysine 122. Lysine 122 and tryptophan 151 together coordinate phosphocholine. Histidine 168, aspartate 169, tyrosine 173, glutamine 195, arginine 196, threonine 197, and isoleucine 200 together coordinate CTP. Amphipathic stretches follow at residues 228–287 (KELN…EFIG) and 298–315 (ALKHMLKEGKGRMLQAIS). Residue serine 233 is modified to Phosphoserine. Residues 272–293 (IDLIQKWEEKSREFIGSFLEMF) are autoinhibitory (AI). Residues 313-367 (AISPKQSPSSSPTRERSPSPSFRWPFSGKTSPPCSPANLSRHKAAAYDISEDEED) form a disordered region. Phosphoserine is present on residues serine 315, serine 319, serine 321, serine 322, and serine 323. Repeat unit 1 spans residues 319-324 (SPSSSP). Over residues 319-339 (SPSSSPTRERSPSPSFRWPFS) the composition is skewed to low complexity. At threonine 325 the chain carries Phosphothreonine. Phosphoserine occurs at positions 329, 331, and 333. The 2; approximate repeat unit spans residues 329-333 (SPSPS). At threonine 342 the chain carries Phosphothreonine. Serine 343, serine 347, serine 352, and serine 362 each carry phosphoserine. Residues 343 to 348 (SPPCSP) form repeat 3.

Belongs to the cytidylyltransferase family. Homodimer. Post-translationally, the serine residues of the C-terminus are phosphorylated. The inactive soluble form is stabilized by phosphorylation, the active membrane bound form is promoted by anionic lipids or diacylglycerol, and is stabilized by dephosphorylation. In terms of processing, monoubiquitinated by the SCF(FBXL2) complex, leading to proteasomal degradation. In terms of tissue distribution, brain, placenta, liver, fetal and adult lung.

It is found in the cytoplasm. Its subcellular location is the cytosol. The protein resides in the membrane. The protein localises to the endoplasmic reticulum membrane. It localises to the nucleus. The catalysed reaction is phosphocholine + CTP + H(+) = CDP-choline + diphosphate. It participates in phospholipid metabolism; phosphatidylcholine biosynthesis; phosphatidylcholine from phosphocholine: step 1/2. Its activity is regulated as follows. Interconverts between an inactive cytosolic form and an active membrane-bound form. Activation involves disruption of an inhibitory interaction between helices at the base of the active site and the autoinhibitory (AI) region. Activated by anionic lipid vesicles and by oleic acid or diacylglycerol-containing phosphatidylcholine vesicles. Functionally, catalyzes the key rate-limiting step in the CDP-choline pathway for phosphatidylcholine biosynthesis. This Homo sapiens (Human) protein is Choline-phosphate cytidylyltransferase A (PCYT1A).